The following is a 184-amino-acid chain: MILPIYVYGQPVLRQVAEDITVDYPNLKELIENMFETMDHADGVGLAAPQIGLPIRVVVINLDVLSEDYPEYKDFRKAYINAHIDVVEGEEVSMEEGCLSLPGIHESVKRGSKIHVRYMDENFVEHNEVVEGFLARVMQHEFDHLDGKMFIDHISPLRKQMIKGKLNTMLKGKARSSYKMKQVK.

Fe cation contacts are provided by Cys98 and His140. Residue Glu141 is part of the active site. His144 provides a ligand contact to Fe cation.

The protein belongs to the polypeptide deformylase family. It depends on Fe(2+) as a cofactor.

It catalyses the reaction N-terminal N-formyl-L-methionyl-[peptide] + H2O = N-terminal L-methionyl-[peptide] + formate. Removes the formyl group from the N-terminal Met of newly synthesized proteins. Requires at least a dipeptide for an efficient rate of reaction. N-terminal L-methionine is a prerequisite for activity but the enzyme has broad specificity at other positions. The chain is Peptide deformylase from Bacteroides fragilis (strain ATCC 25285 / DSM 2151 / CCUG 4856 / JCM 11019 / LMG 10263 / NCTC 9343 / Onslow / VPI 2553 / EN-2).